Reading from the N-terminus, the 78-residue chain is Acyl carrier protein (78 aa).

A Carrier domain is found at 2–77; the sequence is SDTADRVQKI…DATKYIEEHK (76 aa). Ser37 bears the O-(pantetheine 4'-phosphoryl)serine mark.

This sequence belongs to the acyl carrier protein (ACP) family. Post-translationally, 4'-phosphopantetheine is transferred from CoA to a specific serine of apo-ACP by AcpS. This modification is essential for activity because fatty acids are bound in thioester linkage to the sulfhydryl of the prosthetic group.

The protein resides in the cytoplasm. Its pathway is lipid metabolism; fatty acid biosynthesis. Functionally, carrier of the growing fatty acid chain in fatty acid biosynthesis. This is Acyl carrier protein from Erythrobacter litoralis (strain HTCC2594).